Reading from the N-terminus, the 133-residue chain is Profilin-3 (133 aa).

Residues Cys13 and Cys117 are joined by a disulfide bond. Positions 83-99 (AVIRGKKGSGGITIKKT) match the Involved in PIP2 interaction motif. Thr113 is modified (phosphothreonine).

Belongs to the profilin family. In terms of assembly, occurs in many kinds of cells as a complex with monomeric actin in a 1:1 ratio. Post-translationally, phosphorylated by MAP kinases.

The protein localises to the cytoplasm. The protein resides in the cytoskeleton. Functionally, binds to actin and affects the structure of the cytoskeleton. At high concentrations, profilin prevents the polymerization of actin, whereas it enhances it at low concentrations. The sequence is that of Profilin-3 from Corylus avellana (European hazel).